The primary structure comprises 393 residues: Argininosuccinate synthase (393 aa).

ATP is bound by residues 7–15 and Ala-34; that span reads AYSGGLDTS. Positions 85 and 90 each coordinate L-citrulline. Gly-115 is a binding site for ATP. Residues Thr-117, Asn-121, and Asp-122 each contribute to the L-aspartate site. Asn-121 is a binding site for L-citrulline. L-citrulline-binding residues include Arg-125, Ser-176, Ser-185, Glu-261, and Tyr-273.

This sequence belongs to the argininosuccinate synthase family. Type 1 subfamily. In terms of assembly, homotetramer.

The protein localises to the cytoplasm. The enzyme catalyses L-citrulline + L-aspartate + ATP = 2-(N(omega)-L-arginino)succinate + AMP + diphosphate + H(+). It functions in the pathway amino-acid biosynthesis; L-arginine biosynthesis; L-arginine from L-ornithine and carbamoyl phosphate: step 2/3. The sequence is that of Argininosuccinate synthase from Ehrlichia chaffeensis (strain ATCC CRL-10679 / Arkansas).